The chain runs to 314 residues: DegV domain-containing protein XAC3508 (314 aa).

The DegV domain occupies 3–307; that stretch reads IGIVVDSACD…KGALAVGFAA (305 aa). The hexadecanoate site is built by T63 and S96.

Its function is as follows. May bind long-chain fatty acids, such as palmitate, and may play a role in lipid transport or fatty acid metabolism. The polypeptide is DegV domain-containing protein XAC3508 (Xanthomonas axonopodis pv. citri (strain 306)).